The chain runs to 542 residues: Chaperonin GroEL (542 aa).

ATP is bound by residues 29–32 (TLGP), 86–90 (DGTTT), Gly413, 477–479 (NAA), and Asp493.

This sequence belongs to the chaperonin (HSP60) family. Forms a cylinder of 14 subunits composed of two heptameric rings stacked back-to-back. Interacts with the co-chaperonin GroES.

The protein localises to the cytoplasm. It carries out the reaction ATP + H2O + a folded polypeptide = ADP + phosphate + an unfolded polypeptide.. In terms of biological role, together with its co-chaperonin GroES, plays an essential role in assisting protein folding. The GroEL-GroES system forms a nano-cage that allows encapsulation of the non-native substrate proteins and provides a physical environment optimized to promote and accelerate protein folding. The chain is Chaperonin GroEL from Heliobacterium modesticaldum (strain ATCC 51547 / Ice1).